A 351-amino-acid chain; its full sequence is GDSL esterase/lipase At4g26790 (351 aa).

The first 25 residues, 1-25 (MQRNRVLAFLLLAAQLLVKIPETCA), serve as a signal peptide directing secretion. The active-site Nucleophile is the serine 36. N-linked (GlcNAc...) asparagine glycosylation occurs at asparagine 118. Catalysis depends on residues aspartate 326 and histidine 329.

The protein belongs to the 'GDSL' lipolytic enzyme family.

It is found in the secreted. This Arabidopsis thaliana (Mouse-ear cress) protein is GDSL esterase/lipase At4g26790.